Consider the following 80-residue polypeptide: Exodeoxyribonuclease 7 small subunit (80 aa).

This sequence belongs to the XseB family. In terms of assembly, heterooligomer composed of large and small subunits.

It is found in the cytoplasm. The catalysed reaction is Exonucleolytic cleavage in either 5'- to 3'- or 3'- to 5'-direction to yield nucleoside 5'-phosphates.. Functionally, bidirectionally degrades single-stranded DNA into large acid-insoluble oligonucleotides, which are then degraded further into small acid-soluble oligonucleotides. This is Exodeoxyribonuclease 7 small subunit from Pseudoalteromonas translucida (strain TAC 125).